The sequence spans 538 residues: Cytochrome P450 52A4 (538 aa).

Residues 27–46 (WYILIPTILLTLNFLSILHT) form a helical membrane-spanning segment. Cysteine 485 is a heme binding site.

It belongs to the cytochrome P450 family. It depends on heme as a cofactor.

The protein resides in the membrane. Together with an NADPH cytochrome P450 the enzyme system catalyzes the terminal hydroxylation as the first step in the assimilation of alkanes and fatty acids. This is Cytochrome P450 52A4 (CYP52A4) from Candida maltosa (Yeast).